We begin with the raw amino-acid sequence, 534 residues long: CTP synthase (534 aa).

The tract at residues 1-267 (MTKYIFVTGG…DQIVCDHLKL (267 aa)) is amidoligase domain. Ser-13 contacts CTP. Ser-13 is a binding site for UTP. 14–19 (SIGKGI) is a binding site for ATP. An L-glutamine-binding site is contributed by Tyr-54. Asp-71 provides a ligand contact to ATP. Mg(2+)-binding residues include Asp-71 and Glu-141. Residues 148–150 (DIE), 188–193 (KTKPTQ), and Lys-224 each bind CTP. UTP contacts are provided by residues 188-193 (KTKPTQ) and Lys-224. 240-242 (RNV) provides a ligand contact to ATP. In terms of domain architecture, Glutamine amidotransferase type-1 spans 292–534 (KIALVGKYVE…FVTAAIKNSN (243 aa)). L-glutamine is bound at residue Gly-354. Cys-381 (nucleophile; for glutamine hydrolysis) is an active-site residue. Residues 382 to 385 (LGMQ), Glu-405, and Arg-463 contribute to the L-glutamine site. Residues His-508 and Glu-510 contribute to the active site.

This sequence belongs to the CTP synthase family. As to quaternary structure, homotetramer.

The catalysed reaction is UTP + L-glutamine + ATP + H2O = CTP + L-glutamate + ADP + phosphate + 2 H(+). The enzyme catalyses L-glutamine + H2O = L-glutamate + NH4(+). It catalyses the reaction UTP + NH4(+) + ATP = CTP + ADP + phosphate + 2 H(+). The protein operates within pyrimidine metabolism; CTP biosynthesis via de novo pathway; CTP from UDP: step 2/2. Allosterically activated by GTP, when glutamine is the substrate; GTP has no effect on the reaction when ammonia is the substrate. The allosteric effector GTP functions by stabilizing the protein conformation that binds the tetrahedral intermediate(s) formed during glutamine hydrolysis. Inhibited by the product CTP, via allosteric rather than competitive inhibition. Functionally, catalyzes the ATP-dependent amination of UTP to CTP with either L-glutamine or ammonia as the source of nitrogen. Regulates intracellular CTP levels through interactions with the four ribonucleotide triphosphates. This Streptococcus pyogenes serotype M28 (strain MGAS6180) protein is CTP synthase.